We begin with the raw amino-acid sequence, 86 residues long: Large ribosomal subunit protein bL27 (86 aa).

A disordered region spans residues 1 to 26; the sequence is MASKKAGGSTKNGRDSQSKRLGVKRF.

This sequence belongs to the bacterial ribosomal protein bL27 family.

This Bdellovibrio bacteriovorus (strain ATCC 15356 / DSM 50701 / NCIMB 9529 / HD100) protein is Large ribosomal subunit protein bL27.